We begin with the raw amino-acid sequence, 103 residues long: Histone H4 (103 aa).

Residues 1–14 (MSGRGKGGKGLGKG) show a composition bias toward gly residues. The tract at residues 1 to 20 (MSGRGKGGKGLGKGGAKRHR) is disordered. At Lys6 the chain carries N6-acetyl-N6-methyllysine; alternate. 3 positions are modified to N6-methyllysine; alternate: Lys6, Lys9, and Lys13. Lys13 is modified (N6-acetyl-N6-methyllysine; alternate). A DNA-binding region spans residues 17–21 (KRHRK). Lys92 carries the post-translational modification N6-glutaryllysine.

The protein belongs to the histone H4 family. The nucleosome is a histone octamer containing two molecules each of H2A, H2B, H3 and H4 assembled in one H3-H4 heterotetramer and two H2A-H2B heterodimers. The octamer wraps approximately 147 bp of DNA. Post-translationally, glutarylation at Lys-92 (H4K91glu) destabilizes nucleosomes by promoting dissociation of the H2A-H2B dimers from nucleosomes.

It is found in the nucleus. It localises to the chromosome. Core component of nucleosome. Nucleosomes wrap and compact DNA into chromatin, limiting DNA accessibility to the cellular machineries which require DNA as a template. Histones thereby play a central role in transcription regulation, DNA repair, DNA replication and chromosomal stability. DNA accessibility is regulated via a complex set of post-translational modifications of histones, also called histone code, and nucleosome remodeling. In Candida glabrata (strain ATCC 2001 / BCRC 20586 / JCM 3761 / NBRC 0622 / NRRL Y-65 / CBS 138) (Yeast), this protein is Histone H4 (HHF1).